The primary structure comprises 331 residues: MKQTVYIASPESQQIHVWNLNHEGVLTLTQVVDVPGQVQPMVVSPDKRYLYVGVRPEFRVLAYRIAPDDGALTFAAESALPGSPTHISTDHHGQFVFVGSYNAGNVSVTRLEDGLPVGVVDVVEGLDGCHSANISPDNRTLWVPALKQDRICLFTVSDDGHLVAQEPAEVTTVEGAGPRHMVFHPNEQYAYCVNELNSSVDVWELKDPHGNIECVQTLDMMPENFSDTRWAADIHITPDGRHLYACDRTASLITVFSVSEDGSVLSKEGFQPTETQQRGFNVDHSGKYLIAAGQKSHHISVYEIVGEQGLLHEKGRYAVGQGPMWVVVNAH.

Lysine 287 is subject to N6-acetyllysine.

It belongs to the cycloisomerase 2 family.

It carries out the reaction 6-phospho-D-glucono-1,5-lactone + H2O = 6-phospho-D-gluconate + H(+). It functions in the pathway carbohydrate degradation; pentose phosphate pathway; D-ribulose 5-phosphate from D-glucose 6-phosphate (oxidative stage): step 2/3. Functionally, catalyzes the hydrolysis of 6-phosphogluconolactone to 6-phosphogluconate. This chain is 6-phosphogluconolactonase, found in Escherichia coli O7:K1 (strain IAI39 / ExPEC).